Consider the following 1207-residue polypeptide: Plasma membrane calcium-transporting ATPase 4 (1207 aa).

At 1 to 100 (MTNPTEHTLP…KTFLELVWEA (100 aa)) the chain is on the cytoplasmic side. Phosphoserine is present on Ser13. The helical transmembrane segment at 101–121 (LQDVTLIILEIAAIISLVLSF) threads the bilayer. Over 122–147 (YRPPGGENEQCGLAVTSPEDEGEAEA) the chain is Extracellular. A helical transmembrane segment spans residues 148 to 168 (GWIEGAAILFSVIIVVLVTAF). Residues 169-368 (NDWSKEKQFR…LAVQIGKAGL (200 aa)) lie on the Cytoplasmic side of the membrane. The tract at residues 294–317 (EEEKKKKGKKQGVPENRNKAKTQD) is disordered. Phosphoserine occurs at positions 328 and 334. Residues 369-389 (IMSAITVLILILYFVIDNFVI) traverse the membrane as a helical segment. Topologically, residues 390-408 (QRRPWLAECTPIYVQYFVK) are extracellular. A helical membrane pass occupies residues 409 to 429 (FFIIGVTVLVVAVPEGLPLAV). Over 430 to 843 (TISLAYSVKK…RNVYDSISKF (414 aa)) the chain is Cytoplasmic. The 4-aspartylphosphate intermediate role is filled by Asp465. The Mg(2+) site is built by Asp785 and Asp789. A helical membrane pass occupies residues 844-864 (LQFQLTVNVVAVIVAFTGACI). The Extracellular portion of the chain corresponds to 865–871 (TQDSPLK). Residues 872–892 (AVQMLWVNLIMDTFASLALAT) form a helical membrane-spanning segment. Residues 893 to 918 (EPPTDSLLKRRPYGRNKPLISRTMMK) lie on the Cytoplasmic side of the membrane. A helical membrane pass occupies residues 919 to 939 (NILGHAVYQLTVIFFLVFAGE). Over 940-957 (KFFDIDSGRRAPLHSPPS) the chain is Extracellular. Residues 958–977 (QHYTIIFNTFVLMQLFNEIN) form a helical membrane-spanning segment. At 978-994 (SRKIHGERNVFSGIFRN) the chain is on the cytoplasmic side. Residues 995–1015 (LIFCSVVLGTFISQIIIVEFG) form a helical membrane-spanning segment. Over 1016-1028 (GKPFSCTKLTLSQ) the chain is Extracellular. A helical membrane pass occupies residues 1029–1049 (WFWCLFIGIGELLWGQVISTI). At 1050 to 1207 (PTQSLKFLKE…SPLHSLETSV (158 aa)) the chain is on the cytoplasmic side. The interval 1086 to 1103 (LRRGQILWFRGLNRIQTQ) is calmodulin-binding subdomain A. Thr1102 bears the Phosphothreonine; by PKC mark. A calmodulin-binding subdomain B region spans residues 1104–1113 (IKVVKAFHSS). Residues 1159–1181 (VSKPGTKTSSLDGEVTPQTNKNN) are disordered. Positions 1163-1181 (GTKTSSLDGEVTPQTNKNN) are enriched in polar residues.

It belongs to the cation transport ATPase (P-type) (TC 3.A.3) family. Type IIB subfamily. Interacts with PDZD11. Interacts with SLC35G1 and STIM1. Interacts with calmodulin. Isoform 1 is detected in brain, heart, liver, testis and epididymis. Isoform 2 is detected in brain (at protein level), heart, seminal vesicle and epididymis. There is a shift in expression from isoform 1 to isoform 2 along the length of the epididymis from caput to cauda (at protein level).

The protein localises to the cell membrane. The protein resides in the cell projection. Its subcellular location is the cilium. It is found in the flagellum membrane. The enzyme catalyses Ca(2+)(in) + ATP + H2O = Ca(2+)(out) + ADP + phosphate + H(+). Activated by calcium/calmodulin. Calcium/calmodulin-regulated and magnesium-dependent enzyme that catalyzes the hydrolysis of ATP coupled with the transport of calcium out of the cell. By regulating sperm cells calcium homeostasis, may play a role in sperm motility. The chain is Plasma membrane calcium-transporting ATPase 4 from Bos taurus (Bovine).